The following is a 949-amino-acid chain: General transcription factor II-I repeat domain-containing protein 2B (949 aa).

2 GTF2I-like repeats span residues 98–192 (QVHS…QLGG) and 323–417 (LSSI…SNVG).

This sequence belongs to the TFII-I family. In terms of tissue distribution, ubiquitous.

It is found in the nucleus. In Homo sapiens (Human), this protein is General transcription factor II-I repeat domain-containing protein 2B (GTF2IRD2B).